We begin with the raw amino-acid sequence, 87 residues long: Defensin-A (87 aa).

The N-terminal stretch at 1-19 (MKFYLVLAFLTLCAVAVTA) is a signal peptide. A propeptide spanning residues 20-44 (LPAGDETRIDLETLEEDLRLVDGAQ) is cleaved from the precursor. 3 cysteine pairs are disulfide-bonded: cysteine 57/cysteine 78, cysteine 64/cysteine 83, and cysteine 68/cysteine 85.

In terms of tissue distribution, hemolymph and fat body.

The protein resides in the secreted. Functionally, antibacterial peptide mostly active against Gram-positive and Gram negative bacteria. The chain is Defensin-A from Glossina morsitans morsitans (Savannah tsetse fly).